A 331-amino-acid polypeptide reads, in one-letter code: Probable allantoicase (331 aa).

Belongs to the allantoicase family.

The enzyme catalyses allantoate + H2O = (S)-ureidoglycolate + urea. It functions in the pathway nitrogen metabolism; (S)-allantoin degradation; (S)-ureidoglycolate from allantoate (aminidohydrolase route): step 1/1. This Pseudomonas fluorescens (strain ATCC BAA-477 / NRRL B-23932 / Pf-5) protein is Probable allantoicase.